The primary structure comprises 148 residues: MTADIIYIYSDGACKGNPGAGGWGALLVAGGHRKEISGGEPNTTNNRMEMTAVIRALELLKRPSTVEVHTDSQYVQKGVSEWLPGWKRRNWRTADGKPVKNQDLWQQLDALSQQHRIVWKWVRGHAGHPENERADVLANQGVLQARQY.

The RNase H type-1 domain occupies 2–143; that stretch reads TADIIYIYSD…ADVLANQGVL (142 aa). Positions 11, 49, 71, and 135 each coordinate Mg(2+).

The protein belongs to the RNase H family. In terms of assembly, monomer. It depends on Mg(2+) as a cofactor.

The protein localises to the cytoplasm. It carries out the reaction Endonucleolytic cleavage to 5'-phosphomonoester.. Functionally, endonuclease that specifically degrades the RNA of RNA-DNA hybrids. The sequence is that of Ribonuclease H from Thiobacillus denitrificans (strain ATCC 25259 / T1).